We begin with the raw amino-acid sequence, 292 residues long: Glycine--tRNA ligase alpha subunit (292 aa).

It belongs to the class-II aminoacyl-tRNA synthetase family. In terms of assembly, tetramer of two alpha and two beta subunits.

The protein localises to the cytoplasm. The catalysed reaction is tRNA(Gly) + glycine + ATP = glycyl-tRNA(Gly) + AMP + diphosphate. The protein is Glycine--tRNA ligase alpha subunit of Buchnera aphidicola subsp. Schizaphis graminum (strain Sg).